The primary structure comprises 461 residues: Chromosomal replication initiator protein DnaA (461 aa).

Residues 1–87 (MAVSLWQQCI…IGSRPSAKPV (87 aa)) form a domain I, interacts with DnaA modulators region. A domain II region spans residues 87-124 (VVQATAAIRPKPAASKAVEKPTFNAPQAEPAITANHRS). The segment at 125 to 341 (NINPTYQFDN…GALNRVIANA (217 aa)) is domain III, AAA+ region. Positions 169, 171, 172, and 173 each coordinate ATP. Residues 342 to 461 (NFTGRPITID…YANLIRTLSS (120 aa)) are domain IV, binds dsDNA.

It belongs to the DnaA family. Oligomerizes as a right-handed, spiral filament on DNA at oriC.

Its subcellular location is the cytoplasm. Its function is as follows. Plays an essential role in the initiation and regulation of chromosomal replication. ATP-DnaA binds to the origin of replication (oriC) to initiate formation of the DNA replication initiation complex once per cell cycle. Binds the DnaA box (a 9 base pair repeat at the origin) and separates the double-stranded (ds)DNA. Forms a right-handed helical filament on oriC DNA; dsDNA binds to the exterior of the filament while single-stranded (ss)DNA is stabiized in the filament's interior. The ATP-DnaA-oriC complex binds and stabilizes one strand of the AT-rich DNA unwinding element (DUE), permitting loading of DNA polymerase. After initiation quickly degrades to an ADP-DnaA complex that is not apt for DNA replication. Binds acidic phospholipids. This is Chromosomal replication initiator protein DnaA from Shewanella piezotolerans (strain WP3 / JCM 13877).